The following is a 513-amino-acid chain: NADH-quinone oxidoreductase subunit N (513 aa).

Transmembrane regions (helical) follow at residues 20-40 (SVGF…LIVV), 49-69 (STLL…FIYQ), 88-108 (FAIF…VITM), 117-137 (ISSM…MMMM), 144-164 (LMIF…AGYF), 178-198 (LIYG…IYGV), 219-239 (FVML…IGAV), 260-280 (LSVA…YVAL), 295-315 (WFTL…VVAL), 323-343 (LLAY…IVMD), 351-371 (LFYL…VVLI), 394-414 (GAAL…IGFI), 429-451 (IFMW…YMLI), and 474-494 (LVAQ…GLFF).

Belongs to the complex I subunit 2 family. In terms of assembly, NDH-1 is composed of 14 different subunits. Subunits NuoA, H, J, K, L, M, N constitute the membrane sector of the complex.

The protein localises to the cell inner membrane. The enzyme catalyses a quinone + NADH + 5 H(+)(in) = a quinol + NAD(+) + 4 H(+)(out). Its function is as follows. NDH-1 shuttles electrons from NADH, via FMN and iron-sulfur (Fe-S) centers, to quinones in the respiratory chain. The immediate electron acceptor for the enzyme in this species is believed to be a menaquinone. Couples the redox reaction to proton translocation (for every two electrons transferred, four hydrogen ions are translocated across the cytoplasmic membrane), and thus conserves the redox energy in a proton gradient. The polypeptide is NADH-quinone oxidoreductase subunit N (Chlorobium chlorochromatii (strain CaD3)).